We begin with the raw amino-acid sequence, 235 residues long: Serine protease SplA (235 aa).

Residues 1-35 form the signal peptide; sequence MNKNVMVKGLTALDILTSLGCAENISDQPHSIAKA. Active-site charge relay system residues include His-74, Asp-113, and Ser-189.

The protein belongs to the peptidase S1B family.

It localises to the secreted. This chain is Serine protease SplA (splA), found in Staphylococcus aureus.